Reading from the N-terminus, the 1011-residue chain is E3 ubiquitin-protein ligase mib1 (1011 aa).

Residues 6 to 74 (NNRVMVEGVG…AYDLRIMDSA (69 aa)) form the MIB/HERC2 1 domain. The ZZ-type zinc finger occupies 80 to 132 (HDGTMCDTCRQQPIIGIRWKCAECTNYDLCTVCYHGDKHHLRHRFYRITTPGS). Zn(2+)-binding residues include Cys-85, Cys-88, Cys-100, Cys-103, Cys-109, Cys-112, His-118, and His-122. In terms of domain architecture, MIB/HERC2 2 spans 143–221 (SKKITARGIF…MSDLKCVQDA (79 aa)). 9 ANK repeats span residues 430-460 (DLNE…DVNG), 463-492 (AGHT…DVEA), 496-525 (DGDR…DLNA), 529-558 (RRQT…HPSL), 562-591 (EGDT…DVTI), 595-627 (NGFN…IVDE), 631-661 (DGYT…NLDI), 665-694 (NQQT…KLDI), and 698-729 (DGDT…KVDT). RING-type zinc fingers lie at residues 820–855 (CMVC…LLCK) and 867–902 (CVVC…VQCR). Residues 936-963 (QKDKDNTNVNADVQKLQQQLQDIKEQTM) are a coiled coil. Residues 964-997 (CPVCLDRLKNMIFMCGHGTCQLCGDRMSECPICR) form an RING-type 3 zinc finger.

It is found in the cytoplasm. The protein resides in the cytoskeleton. The protein localises to the microtubule organizing center. It localises to the centrosome. Its subcellular location is the centriolar satellite. It catalyses the reaction S-ubiquitinyl-[E2 ubiquitin-conjugating enzyme]-L-cysteine + [acceptor protein]-L-lysine = [E2 ubiquitin-conjugating enzyme]-L-cysteine + N(6)-ubiquitinyl-[acceptor protein]-L-lysine.. It functions in the pathway protein modification; protein ubiquitination. Functionally, E3 ubiquitin-protein ligase that mediates ubiquitination of Delta receptors, which act as ligands of Notch proteins. Positively regulates the Delta-mediated Notch signaling by ubiquitinating the intracellular domain of Delta, leading to endocytosis of Delta receptors. This Xenopus laevis (African clawed frog) protein is E3 ubiquitin-protein ligase mib1 (mib1).